Consider the following 465-residue polypeptide: UDP-N-acetylmuramoylalanine--D-glutamate ligase (465 aa).

Glycine 115–threonine 121 lines the ATP pocket.

It belongs to the MurCDEF family.

It is found in the cytoplasm. It carries out the reaction UDP-N-acetyl-alpha-D-muramoyl-L-alanine + D-glutamate + ATP = UDP-N-acetyl-alpha-D-muramoyl-L-alanyl-D-glutamate + ADP + phosphate + H(+). Its pathway is cell wall biogenesis; peptidoglycan biosynthesis. Functionally, cell wall formation. Catalyzes the addition of glutamate to the nucleotide precursor UDP-N-acetylmuramoyl-L-alanine (UMA). The protein is UDP-N-acetylmuramoylalanine--D-glutamate ligase of Chlorobaculum tepidum (strain ATCC 49652 / DSM 12025 / NBRC 103806 / TLS) (Chlorobium tepidum).